The following is a 358-amino-acid chain: uncharacterized protein (358 aa).

A disordered region spans residues 1-47; the sequence is MGNVAGETRANVIPLHTNRSRVAARRRAGQRAESRQHPSLLSDPNDR. Positions 18–29 are enriched in basic residues; the sequence is NRSRVAARRRAG.

The protein to M.leprae ML2427.

This is an uncharacterized protein from Mycobacterium tuberculosis (strain CDC 1551 / Oshkosh).